Here is a 253-residue protein sequence, read N- to C-terminus: rRNA adenine N-6-methyltransferase (253 aa).

Positions 14, 16, 40, 61, 85, and 101 each coordinate S-adenosyl-L-methionine. The segment at 229 to 253 (CAREESTPRPYLPDCTPTTGSISSR) is disordered. Polar residues predominate over residues 244 to 253 (TPTTGSISSR).

Belongs to the class I-like SAM-binding methyltransferase superfamily. rRNA adenine N(6)-methyltransferase family.

Its function is as follows. Involved in erythromycin resistance. The protein is rRNA adenine N-6-methyltransferase (ermA) of Corynebacterium diphtheriae.